The primary structure comprises 90 residues: Small regulatory polypeptide of amino acid response (90 aa).

Residues 1–18 (MGAKAPRGPKVAQWAMET) are Lumenal-facing. A helical transmembrane segment spans residues 19–39 (AVIGVVVVLFVVTVAITCVLC). Topologically, residues 40 to 90 (CFSCDSRAQDPQGGPGRSFTVATFRQEASLFTGPVRHAQPVPSAQDFWTFM) are cytoplasmic.

In terms of assembly, interacts with components of the lysosomal V-ATPase complex. Interacts with ATP6V0A1. Interacts with ATP6V0A2. Highly expressed in lung, heart and skeletal muscle.

It is found in the late endosome membrane. Its subcellular location is the lysosome membrane. Functionally, negative regulator of amino acid sensing and mTORC1, a signaling complex promoting cell growth in response to growth factors, energy levels and amino acids. Negatively regulates mTORC1 activation by inhibiting recruitment of mTORC1 to lysosomes upon stimulation with amino acids: acts by promoting the formation of a tightly bound supercomplex composed of the lysosomal V-ATPase, Ragulator and Rag GTPases, preventing recruitment of mTORC1. Acts as a regulator of muscle regeneration following injury by regulating mTORC1 activation. The chain is Small regulatory polypeptide of amino acid response from Homo sapiens (Human).